The chain runs to 204 residues: Peptidyl-tRNA hydrolase (204 aa).

Tyrosine 14 lines the tRNA pocket. Catalysis depends on histidine 19, which acts as the Proton acceptor. Positions 64, 66, and 112 each coordinate tRNA.

Belongs to the PTH family. In terms of assembly, monomer.

The protein localises to the cytoplasm. It catalyses the reaction an N-acyl-L-alpha-aminoacyl-tRNA + H2O = an N-acyl-L-amino acid + a tRNA + H(+). In terms of biological role, hydrolyzes ribosome-free peptidyl-tRNAs (with 1 or more amino acids incorporated), which drop off the ribosome during protein synthesis, or as a result of ribosome stalling. Catalyzes the release of premature peptidyl moieties from peptidyl-tRNA molecules trapped in stalled 50S ribosomal subunits, and thus maintains levels of free tRNAs and 50S ribosomes. This is Peptidyl-tRNA hydrolase from Nitrobacter hamburgensis (strain DSM 10229 / NCIMB 13809 / X14).